A 642-amino-acid chain; its full sequence is Threonine--tRNA ligase (642 aa).

The 65-residue stretch at 1-65 folds into the TGS domain; the sequence is MSDIITVTLP…DEDVKLQIFT (65 aa). The tract at residues 248–541 is catalytic; the sequence is DHRKLGKELD…LIEHFAGAFP (294 aa). 3 residues coordinate Zn(2+): cysteine 342, histidine 393, and histidine 518.

This sequence belongs to the class-II aminoacyl-tRNA synthetase family. In terms of assembly, homodimer. Requires Zn(2+) as cofactor.

The protein localises to the cytoplasm. It catalyses the reaction tRNA(Thr) + L-threonine + ATP = L-threonyl-tRNA(Thr) + AMP + diphosphate + H(+). Its function is as follows. Catalyzes the attachment of threonine to tRNA(Thr) in a two-step reaction: L-threonine is first activated by ATP to form Thr-AMP and then transferred to the acceptor end of tRNA(Thr). Also edits incorrectly charged L-seryl-tRNA(Thr). In Myxococcus xanthus (strain DK1622), this protein is Threonine--tRNA ligase.